The sequence spans 410 residues: Angiopoietin-related protein 4 (410 aa).

The first 23 residues, 1-23 (MRCAPTAGAALVLCAATAGLLSA), serve as a signal peptide directing secretion. Positions 79-101 (ACQGPKGKDAPFKDSEDRVPEGQ) are disordered. Positions 84-98 (KGKDAPFKDSEDRVP) are enriched in basic and acidic residues. A coiled-coil region spans residues 104–152 (ETLQSLQTQLKAQNSKIQQLFQKVAQQQRYLSKQNLRIQNLQSQIDLLA). Asn-181 carries N-linked (GlcNAc...) asparagine glycosylation. Residues 183–405 (THLHRPPRDC…ATTLLIQPME (223 aa)) form the Fibrinogen C-terminal domain. Cys-192 and Cys-220 are joined by a disulfide. N-linked (GlcNAc...) asparagine glycosylation is found at Asn-236 and Asn-242. A disulfide bond links Cys-345 and Cys-358.

In terms of assembly, homooligomer; disulfide-linked via Cys residues in the N-terminal part of the protein. The homooligomer undergoes proteolytic processing to release the ANGPTL4 C-terminal chain, which circulates as a monomer. The homooligomer unprocessed form is able to interact with the extracellular matrix. N-glycosylated. Post-translationally, forms disulfide-linked dimers and tetramers. In terms of processing, cleaved into a smaller N-terminal chain and a larger chain that contains the fibrinogen C-terminal domain; both cleaved and uncleaved forms are detected in the extracellular space. The cleaved form is not present within the cell. Detected in liver and kidney. Predominantly expressed in adipose tissue and is strongly up-regulated by fasting in white adipose tissue and liver. More abundant in areas of lower flow stress in the inner curvature compared to the outer curvature regions of the aorta (at protein level).

The protein resides in the secreted. Its subcellular location is the extracellular space. It is found in the extracellular matrix. Functionally, mediates inactivation of the lipoprotein lipase LPL, and thereby plays a role in the regulation of triglyceride clearance from the blood serum and in lipid metabolism. May also play a role in regulating glucose homeostasis and insulin sensitivity. Inhibits proliferation, migration, and tubule formation of endothelial cells and reduces vascular leakage. Upon heterologous expression, inhibits the adhesion of endothelial cell to the extracellular matrix (ECM), and inhibits the reorganization of the actin cytoskeleton, formation of actin stress fibers and focal adhesions in endothelial cells that have adhered to ANGPTL4-containing ECM (in vitro). Depending on context, may modulate tumor-related angiogenesis. In terms of biological role, mediates inactivation of the lipoprotein lipase LPL, and thereby plays an important role in the regulation of triglyceride clearance from the blood serum and in lipid metabolism. Has higher activity in LPL inactivation than the uncleaved protein. This is Angiopoietin-related protein 4 (Angptl4) from Mus musculus (Mouse).